A 475-amino-acid polypeptide reads, in one-letter code: Bifunctional protein HldE (475 aa).

The tract at residues 1-318 (MKITLPEFEK…ANALYTEQET (318 aa)) is ribokinase. Residue 195-198 (NMSE) coordinates ATP. Residue Asp-264 is part of the active site. The tract at residues 344 to 475 (MTNGCFDILH…DIIKTIRERG (132 aa)) is cytidylyltransferase.

The protein in the N-terminal section; belongs to the carbohydrate kinase PfkB family. It in the C-terminal section; belongs to the cytidylyltransferase family. Homodimer.

It carries out the reaction D-glycero-beta-D-manno-heptose 7-phosphate + ATP = D-glycero-beta-D-manno-heptose 1,7-bisphosphate + ADP + H(+). The catalysed reaction is D-glycero-beta-D-manno-heptose 1-phosphate + ATP + H(+) = ADP-D-glycero-beta-D-manno-heptose + diphosphate. The protein operates within nucleotide-sugar biosynthesis; ADP-L-glycero-beta-D-manno-heptose biosynthesis; ADP-L-glycero-beta-D-manno-heptose from D-glycero-beta-D-manno-heptose 7-phosphate: step 1/4. It functions in the pathway nucleotide-sugar biosynthesis; ADP-L-glycero-beta-D-manno-heptose biosynthesis; ADP-L-glycero-beta-D-manno-heptose from D-glycero-beta-D-manno-heptose 7-phosphate: step 3/4. Its function is as follows. Catalyzes the phosphorylation of D-glycero-D-manno-heptose 7-phosphate at the C-1 position to selectively form D-glycero-beta-D-manno-heptose-1,7-bisphosphate. Catalyzes the ADP transfer from ATP to D-glycero-beta-D-manno-heptose 1-phosphate, yielding ADP-D-glycero-beta-D-manno-heptose. The sequence is that of Bifunctional protein HldE from Aeromonas hydrophila subsp. hydrophila (strain ATCC 7966 / DSM 30187 / BCRC 13018 / CCUG 14551 / JCM 1027 / KCTC 2358 / NCIMB 9240 / NCTC 8049).